We begin with the raw amino-acid sequence, 130 residues long: Small ribosomal subunit protein uS9 (130 aa).

The protein belongs to the universal ribosomal protein uS9 family.

The polypeptide is Small ribosomal subunit protein uS9 (Acidovorax ebreus (strain TPSY) (Diaphorobacter sp. (strain TPSY))).